Reading from the N-terminus, the 508-residue chain is p-aminobenzoyl-glutamate transport protein (508 aa).

13 helical membrane passes run 30-50 (FLLFIYLIIVLMVTTAILSAF), 85-105 (FSGFAPLGAILALVLGAGLAE), 121-139 (VNARYASYMVLFIAFFSHI), 140-159 (SSDAALVIMPPMGALIFLAV), 164-184 (VAGLLAAIAGVGCGFTANLLI), 211-231 (IDNWYFMASSVVVLTIVGGLI), 261-281 (GLRIAGVVSLLFIAAIALMVI), 303-323 (GIVPLIILFFFVVSLAYGIAT), 343-363 (MAGFIVMVFPLAQFVAMFNWS), 382-402 (LSGIPAFVGLALLSSFLCMFI), 405-425 (GSAIWSILAPIFVPMFMLLGF), 439-459 (SSVLPLAPVSPFVPLFLGFLQ), and 479-499 (LIFLVVWLLMLLAWYLVGLPI).

It is found in the cell inner membrane. The enzyme catalyses N-(4-aminobenzoyl)-L-glutamate(in) + H(+)(in) = N-(4-aminobenzoyl)-L-glutamate(out) + H(+)(out). Completely inhibited by 100 nM sodium azide and by the proton ionophore carbonyl cyanide m-chlorophenylhydrazone (CCCP). Is also strongly inhibited by 100 mM potassium fluoride. Functionally, essential for aminobenzoyl-glutamate utilization. It catalyzes the concentration-dependent uptake of p-aminobenzoyl-glutamate (PABA-GLU) into the cell and allows accumulation of PABA-GLU to a concentration enabling AbgAB to catalyze cleavage into p-aminobenzoate and glutamate. It also seems to increase the sensitivity to low levels of aminobenzoyl-glutamate. May actually serve physiologically as a transporter for some other molecule, perhaps a dipeptide, and that it transports p-aminobenzoyl-glutamate as a secondary activity. The physiological role of abgABT should be clarified. The protein is p-aminobenzoyl-glutamate transport protein of Escherichia coli (strain K12).